The following is a 559-amino-acid chain: TBC1 domain family member 24 (559 aa).

Residues Lys-36, Arg-40, Lys-238, Arg-242, and 293-297 (RLFSR) contribute to the a 1,2-diacyl-sn-glycero-3-phospho-(1D-myo-inositol) site. One can recognise a Rab-GAP TBC domain in the interval 47–262 (SHALRGKVYQ…KVRAGQPLES (216 aa)). Residues 343–554 (EIVSVREMRD…IAAVEAWGFQ (212 aa)) enclose the TLDc domain. 2 positions are modified to phosphoserine: Ser-473 and Ser-480.

As to quaternary structure, interacts with ARF6. As to expression, highest expression in brain.

It localises to the cell membrane. The protein localises to the cytoplasm. The protein resides in the cytoplasmic vesicle membrane. It is found in the presynapse. Functionally, may act as a GTPase-activating protein for Rab family protein(s). Involved in neuronal projections development, probably through a negative modulation of ARF6 function. Involved in the regulation of synaptic vesicle trafficking. The polypeptide is TBC1 domain family member 24 (TBC1D24) (Homo sapiens (Human)).